We begin with the raw amino-acid sequence, 422 residues long: Histidine--tRNA ligase (422 aa).

The protein belongs to the class-II aminoacyl-tRNA synthetase family. Homodimer.

The protein resides in the cytoplasm. The catalysed reaction is tRNA(His) + L-histidine + ATP = L-histidyl-tRNA(His) + AMP + diphosphate + H(+). This is Histidine--tRNA ligase from Ruthia magnifica subsp. Calyptogena magnifica.